A 136-amino-acid polypeptide reads, in one-letter code: Histone H3 (136 aa).

Residues 1–42 are disordered; that stretch reads MARTKQTARKSTGGKAPRKQIAAKAARKAAPSTGGVKKPHRY. Position 5 is an N6,N6,N6-trimethyllysine; alternate (K5). N6,N6-dimethyllysine; alternate is present on K5. 2 positions are modified to N6-methyllysine; alternate: K5 and K10. K10 is subject to N6-acetyllysine; alternate. Residue S11 is modified to Phosphoserine. At K15 the chain carries N6,N6-dimethyllysine; alternate. An N6-acetyllysine; alternate mark is found at K15, K19, K24, K28, and K37. K19, K24, K28, and K37 each carry N6-methyllysine; alternate. Residues 19-31 show a composition bias toward low complexity; that stretch reads KQIAAKAARKAAP. N6,N6,N6-trimethyllysine; alternate occurs at positions 28 and 37. 2 positions are modified to N6,N6-dimethyllysine; alternate: K28 and K37. K57 and K65 each carry N6-acetyllysine. Position 80 is an N6,N6,N6-trimethyllysine; alternate (K80). Position 80 is an N6,N6-dimethyllysine; alternate (K80). Residue K80 is modified to N6-methyllysine; alternate.

The protein belongs to the histone H3 family. The nucleosome is a histone octamer containing two molecules each of H2A, H2B, H3 and H4 assembled in one H3-H4 heterotetramer and two H2A-H2B heterodimers. The octamer wraps approximately 147 bp of DNA. In terms of processing, phosphorylated to form H3S10ph. H3S10ph promotes subsequent H3K14ac formation and is required for transcriptional activation through TBP recruitment to the promoters. Post-translationally, mono-, di- and trimethylated by the COMPASS complex to form H3K4me1/2/3. H3K4me activates gene expression by regulating transcription elongation and plays a role in telomere length maintenance. H3K4me enrichment correlates with transcription levels, and occurs in a 5' to 3' gradient with H3K4me3 enrichment at the 5'-end of genes, shifting to H3K4me2 and then H3K4me1. Methylated by SET2 to form H3K36me. H3K36me represses gene expression. Methylated by DOT1 to form H3K79me. H3K79me is required for association of SIR proteins with telomeric regions and for telomeric silencing. The COMPASS-mediated formation of H3K4me2/3 and the DOT1-mediated formation of H3K79me require H2BK123ub1. Acetylation of histone H3 leads to transcriptional activation. H3K14ac formation by GCN5 is promoted by H3S10ph. H3K14ac can also be formed by ESA1. H3K56ac formation occurs predominantly in newly synthesized H3 molecules during G1, S and G2/M of the cell cycle and may be involved in DNA repair.

It is found in the nucleus. It localises to the chromosome. In terms of biological role, core component of nucleosome. Nucleosomes wrap and compact DNA into chromatin, limiting DNA accessibility to the cellular machineries which require DNA as a template. Histones thereby play a central role in transcription regulation, DNA repair, DNA replication and chromosomal stability. DNA accessibility is regulated via a complex set of post-translational modifications of histones, also called histone code, and nucleosome remodeling. In Coccidioides immitis (strain RS) (Valley fever fungus), this protein is Histone H3 (HHT1).